Reading from the N-terminus, the 496-residue chain is Versicolorin B desaturase stcL (496 aa).

A helical transmembrane segment spans residues 3–23 (FLSLPILTALGAVVYVLFQLV). Residue Cys440 coordinates heme.

Belongs to the cytochrome P450 family. Heme is required as a cofactor.

The protein localises to the membrane. The catalysed reaction is versicolorin B + NADPH + O2 + H(+) = versicolorin A + NADP(+) + 2 H2O. It functions in the pathway mycotoxin biosynthesis; sterigmatocystin biosynthesis. Cytochrome P450 monooxygenase; part of the gene cluster that mediates the biosynthesis of sterigmatocystin (ST), a polyketide-derived furanocoumarin which is part of the most toxic and carcinogenic compounds among the known mycotoxins. The first step in the biosynthesis of sterigmatocystin is the production of hexanoate by the fatty acid synthase (FAS) units stcJ and stcK. The polyketide backbone is assembled by the non-reducing polyketide synthase stcA by condensation of the starter hexanoyl-CoA and 7 malonyl-CoA extender units followed by cyclization and release of norsolorinic acid. Norsolorinic acid is the first stable intermediate in the biosynthesis of sterigmatocystin and is converted into averantin (AVN) by the ketoreductase stcE which reduces the hexanoate ketone to an alcohol. Averantin is then oxidized into 5'-hydroxyaverantin (HAVN) by the cytochrome P450 monooxygenase stcF. 5'-hydroxyaverantin is further converted to 5'-oxyaverantin (OAVN) by the 5'-hydroxyaverantin dehydrogenase stcG. The next step is the conversion of OAVN into averufin (AVF) which is catalyzed by a yet to be identified enzyme. The cytochrome P450 monooxygenase stcB and the flavin-binding monooxygenase stcW are both required for the conversion of averufin to 1-hydroxyversicolorone. The esterase stcI probably catalyzes the formation of versiconal hemiacetal acetate from 1-hydroxyversicolorone. The oxydoreductase stcN then probably catalyzes the biosynthetic step from versiconal to versicolorin B (VERB). The next step is performed by the versicolorin B desaturase stcL to produce versicolorin A (VERA). The ketoreductase stcU and the cytochrome P450 monooxygenase stcS are involved in the conversion of versicolorin A to demethylsterigmatocystin. The Baeyer-Villiger oxidas stcQ and the reductase stcR might be involved in the biosynthetic step from versicolorin A to demethylsterigmatocystin. The final step in the biosynthesis of sterigmatocystin is the methylation of demethylsterigmatocystin catalyzed by the methyltransferase stcP. This is Versicolorin B desaturase stcL from Emericella nidulans (strain FGSC A4 / ATCC 38163 / CBS 112.46 / NRRL 194 / M139) (Aspergillus nidulans).